A 486-amino-acid chain; its full sequence is CUGBP Elav-like family member 1 (486 aa).

Met-1 carries the N-acetylmethionine modification. Residue Thr-4 is modified to Phosphothreonine. 2 consecutive RRM domains span residues 16 to 99 (IKMF…PADS) and 108 to 188 (RKLF…FADT). A Glycyl lysine isopeptide (Lys-Gly) (interchain with G-Cter in SUMO2) cross-link involves residue Lys-109. 2 positions are modified to phosphoserine: Ser-179 and Ser-302. The segment at 277–309 (TPSGTNALTTSSSPLSVLTSSGSSPSSSSSNSV) is disordered. Residues 284–309 (LTTSSSPLSVLTSSGSSPSSSSSNSV) are compositionally biased toward low complexity. Residues 401-479 (ANLFIYHLPQ…KRLKVQLKRS (79 aa)) form the RRM 3 domain.

Belongs to the CELF/BRUNOL family. Component of an EIF2 complex at least composed of CELF1/CUGBP1, CALR, CALR3, EIF2S1, EIF2S2, HSP90B1 and HSPA5. Associates with polysomes. Interacts with HNRNPH1; the interaction in RNA-dependent. Interacts with PARN. Post-translationally, phosphorylated. Its phosphorylation status increases in senescent cells. In terms of tissue distribution, ubiquitous.

Its subcellular location is the nucleus. It is found in the cytoplasm. In terms of biological role, RNA-binding protein implicated in the regulation of several post-transcriptional events. Involved in pre-mRNA alternative splicing, mRNA translation and stability. Mediates exon inclusion and/or exclusion in pre-mRNA that are subject to tissue-specific and developmentally regulated alternative splicing. Specifically activates exon 5 inclusion of cardiac isoforms of TNNT2 during heart remodeling at the juvenile to adult transition. Acts both as an activator and as a repressor of a pair of coregulated exons: promotes inclusion of the smooth muscle (SM) exon but exclusion of the non-muscle (NM) exon in actinin pre-mRNAs. Activates SM exon 5 inclusion by antagonizing the repressive effect of PTB. Promotes exclusion of exon 11 of the INSR pre-mRNA. Inhibits, together with HNRNPH1, insulin receptor (IR) pre-mRNA exon 11 inclusion in myoblast. Increases translation and controls the choice of translation initiation codon of CEBPB mRNA. Increases mRNA translation of CEBPB in aging liver. Increases translation of CDKN1A mRNA by antagonizing the repressive effect of CALR3. Mediates rapid cytoplasmic mRNA deadenylation. Recruits the deadenylase PARN to the poly(A) tail of EDEN-containing mRNAs to promote their deadenylation. Required for completion of spermatogenesis. Binds to (CUG)n triplet repeats in the 3'-UTR of transcripts such as DMPK and to Bruno response elements (BREs). Binds to muscle-specific splicing enhancer (MSE) intronic sites flanking the alternative exon 5 of TNNT2 pre-mRNA. Binds to AU-rich sequences (AREs or EDEN-like) localized in the 3'-UTR of JUN and FOS mRNAs. Binds to the IR RNA. Binds to the 5'-region of CDKN1A and CEBPB mRNAs. Binds with the 5'-region of CEBPB mRNA in aging liver. May be a specific regulator of miRNA biogenesis. Binds to primary microRNA pri-MIR140 and, with CELF2, negatively regulates the processing to mature miRNA. The protein is CUGBP Elav-like family member 1 (CELF1) of Homo sapiens (Human).